The chain runs to 355 residues: Protein RecA (355 aa).

72-79 lines the ATP pocket; that stretch reads GPESSGKT.

The protein belongs to the RecA family.

The protein localises to the cytoplasm. Functionally, can catalyze the hydrolysis of ATP in the presence of single-stranded DNA, the ATP-dependent uptake of single-stranded DNA by duplex DNA, and the ATP-dependent hybridization of homologous single-stranded DNAs. It interacts with LexA causing its activation and leading to its autocatalytic cleavage. The sequence is that of Protein RecA from Wolbachia sp. subsp. Drosophila simulans (strain wRi).